The primary structure comprises 25 residues: Panurgine R (25 aa).

Intrachain disulfides connect Cys8-Cys23 and Cys11-Cys19.

Its subcellular location is the target cell membrane. The protein resides in the secreted. Antimicrobial peptide active against Gram-positive bacteria M.luteus (MIC=0.8 uM) and B.subtilis (MIC=1.5 uM). Less active against Gram-negative bacteria E.coli (MIC=32.5 uM) and yeast C.albicans (MIC=18.7 uM). Not active against S.aureus and P.aeruginosa. Has no hemolytic activity against human erythrocytes. Probably acts by disrupting membranes of target cells. This is Panurgine R from Panurgus calcaratus (Solitary bee).